The sequence spans 29 residues: Conotoxin Bu17 (29 aa).

3 disulfides stabilise this stretch: C4–C19, C5–C25, and C15–C26. C26 carries the post-translational modification Cysteine amide.

Belongs to the conotoxin M superfamily. As to expression, expressed by the venom duct.

It localises to the secreted. The polypeptide is Conotoxin Bu17 (Conus bullatus (Bubble cone)).